Here is a 155-residue protein sequence, read N- to C-terminus: Small ribosomal subunit protein uS7cz/uS7cy (155 aa).

It belongs to the universal ribosomal protein uS7 family. As to quaternary structure, part of the 30S ribosomal subunit.

It is found in the plastid. The protein localises to the chloroplast. Its function is as follows. One of the primary rRNA binding proteins, it binds directly to 16S rRNA where it nucleates assembly of the head domain of the 30S subunit. In Eucalyptus globulus subsp. globulus (Tasmanian blue gum), this protein is Small ribosomal subunit protein uS7cz/uS7cy (rps7-A).